The sequence spans 69 residues: Conotoxin Eb6.1 (69 aa).

An N-terminal signal peptide occupies residues 1 to 17 (VLIIAVLFLTACQLTTA). Positions 18–41 (ETYSRGRQKHRARRSTDKNSKWTR) are excised as a propeptide. Disulfide bonds link cysteine 43–cysteine 57, cysteine 50–cysteine 61, and cysteine 56–cysteine 68.

It belongs to the conotoxin O1 superfamily. As to expression, expressed by the venom duct.

It is found in the secreted. The sequence is that of Conotoxin Eb6.1 (E1) from Conus ebraeus (Hebrew cone).